The chain runs to 355 residues: uncharacterized protein (355 aa).

The protein belongs to the 3-beta-HSD family.

This is an uncharacterized protein from Frog virus 3 (isolate Goorha) (FV-3).